Consider the following 797-residue polypeptide: Probable DNA polymerase (797 aa).

It belongs to the DNA polymerase type-B family.

Its subcellular location is the mitochondrion. It catalyses the reaction DNA(n) + a 2'-deoxyribonucleoside 5'-triphosphate = DNA(n+1) + diphosphate. This is Probable DNA polymerase from Agaricus bitorquis (Pavement mushroom).